The primary structure comprises 278 residues: Elongation factor Ts (278 aa).

The involved in Mg(2+) ion dislocation from EF-Tu stretch occupies residues 80 to 83 (TDFV).

Belongs to the EF-Ts family.

Its subcellular location is the cytoplasm. In terms of biological role, associates with the EF-Tu.GDP complex and induces the exchange of GDP to GTP. It remains bound to the aminoacyl-tRNA.EF-Tu.GTP complex up to the GTP hydrolysis stage on the ribosome. This chain is Elongation factor Ts, found in Renibacterium salmoninarum (strain ATCC 33209 / DSM 20767 / JCM 11484 / NBRC 15589 / NCIMB 2235).